The following is a 1399-amino-acid chain: DNA-directed RNA polymerase subunit beta' (1399 aa).

Zn(2+) is bound by residues Cys-70, Cys-72, Cys-85, and Cys-88. Positions 460, 462, and 464 each coordinate Mg(2+). Zn(2+) is bound by residues Cys-814, Cys-888, Cys-895, and Cys-898.

It belongs to the RNA polymerase beta' chain family. In terms of assembly, the RNAP catalytic core consists of 2 alpha, 1 beta, 1 beta' and 1 omega subunit. When a sigma factor is associated with the core the holoenzyme is formed, which can initiate transcription. It depends on Mg(2+) as a cofactor. Requires Zn(2+) as cofactor.

The enzyme catalyses RNA(n) + a ribonucleoside 5'-triphosphate = RNA(n+1) + diphosphate. Its function is as follows. DNA-dependent RNA polymerase catalyzes the transcription of DNA into RNA using the four ribonucleoside triphosphates as substrates. This Pseudomonas fluorescens (strain ATCC BAA-477 / NRRL B-23932 / Pf-5) protein is DNA-directed RNA polymerase subunit beta'.